A 438-amino-acid chain; its full sequence is 3-phosphoshikimate 1-carboxyvinyltransferase (438 aa).

Residues K26, S27, and R31 each coordinate 3-phosphoshikimate. K26 lines the phosphoenolpyruvate pocket. Phosphoenolpyruvate contacts are provided by G99 and R127. 4 residues coordinate 3-phosphoshikimate: S172, Q174, D320, and K347. Position 174 (Q174) interacts with phosphoenolpyruvate. D320 acts as the Proton acceptor in catalysis. 2 residues coordinate phosphoenolpyruvate: R351 and R392.

It belongs to the EPSP synthase family. As to quaternary structure, monomer.

The protein resides in the cytoplasm. The enzyme catalyses 3-phosphoshikimate + phosphoenolpyruvate = 5-O-(1-carboxyvinyl)-3-phosphoshikimate + phosphate. It participates in metabolic intermediate biosynthesis; chorismate biosynthesis; chorismate from D-erythrose 4-phosphate and phosphoenolpyruvate: step 6/7. Its function is as follows. Catalyzes the transfer of the enolpyruvyl moiety of phosphoenolpyruvate (PEP) to the 5-hydroxyl of shikimate-3-phosphate (S3P) to produce enolpyruvyl shikimate-3-phosphate and inorganic phosphate. In Xanthomonas campestris pv. campestris (strain B100), this protein is 3-phosphoshikimate 1-carboxyvinyltransferase.